The primary structure comprises 841 residues: MSRLIVKGLPKYYTEEKLREFFSKQGDVTDVKLMKKRNGESRKFAFIGYKSADAAERAVKYFNKSFIDTARIEVEFAKTFSDPTVPLSFKEKRKREEQKLKDEQERLLEQELRAQAKKQKTKSTSEIDDEIASNPKLREYMEVMKPSHQVKSWANDTIADGSGGPSVQDLENALNGNNESPVDKSNIEVVNTVEDASDDEYNDFKELSNKHGENEDEEEEEEMMSLGDLPTNEENKDKNESGENLAANENISDLEWLKSRSTRIKENGEVPEIVPEVKEVNEVTEATQQSDNEPEMTPEEQIAHKIEETGRLFIRNISYEASEEDFRSLFSQYGALEEVHIAIDTRTGKSKGFLYVQFLKKEDATRAYRSLDKQIFQGRLLHILPADKKKDHRLDEFDLKNLPLKKQRELKKKAQAAKTQFSWNSLYMNSDAVLESVASKLGVTKSQLIDPENSSSAVKQALAEAHVIGDVRKYFEDRGVDLTSFDKKERDDKIILVKNFPFGTTIDEIGELFSAYGQLKRMLMPPAGTIAIIEFRDAPSARAAFSKLAYKRFKSSILYLEKGPKDLFTREPTTNEVATIPEQQQNEHAVEAKISANEILGESKEDDEIESVQGPTVAVFVKNLNFATTVQALSDLFKPLPGFVVATVKTKPDPKNSGKTLSMGFGFVEFRTKEQANVAISTLDGHVLDGHKLQLKLSHKQGTGTSASSIKKSGKSSKIIIKNLPFEATRKDLLELFGAFGQLKSVRVPKKFDQSARGFAFVEFNLMKEAETAMSQLEGVHLLGRRLVMQYAEQDAENAEVEIERMTKKVKKQVATQNLAAARLAGKGKIELEEKDEEDFD.

Residues 2–79 (SRLIVKGLPK…ARIEVEFAKT (78 aa)) form the RRM 1 domain. Positions 194-249 (EDASDDEYNDFKELSNKHGENEDEEEEEEMMSLGDLPTNEENKDKNESGENLAANE) are disordered. The span at 202-213 (NDFKELSNKHGE) shows a compositional bias: basic and acidic residues. Positions 214–223 (NEDEEEEEEM) are enriched in acidic residues. 4 RRM domains span residues 310–388 (GRLF…PADK), 493–565 (KIIL…KGPK), 617–700 (VAVF…LSHK), and 717–794 (SKII…YAEQ).

This sequence belongs to the RRM MRD1 family.

The protein localises to the nucleus. In terms of biological role, involved in pre-rRNA processing. This chain is Multiple RNA-binding domain-containing protein 1 (MRD1), found in Candida albicans (strain SC5314 / ATCC MYA-2876) (Yeast).